The sequence spans 212 residues: Leucine efflux protein (212 aa).

A run of 6 helical transmembrane segments spans residues 12-32 (TYLV…LFVL), 49-69 (GVFI…ATLI), 71-91 (TTPI…LYLG), 122-142 (ILSL…VQFI), 153-173 (FFIL…FLII), and 188-208 (LAKV…ARLA).

This sequence belongs to the Rht family.

The protein localises to the cell inner membrane. The catalysed reaction is L-leucine(in) + H(+)(out) = L-leucine(out) + H(+)(in). Exporter of leucine. This Shigella sonnei (strain Ss046) protein is Leucine efflux protein (leuE).